A 170-amino-acid chain; its full sequence is Adenine phosphoribosyltransferase (170 aa).

It belongs to the purine/pyrimidine phosphoribosyltransferase family. Homodimer.

It localises to the cytoplasm. The enzyme catalyses AMP + diphosphate = 5-phospho-alpha-D-ribose 1-diphosphate + adenine. The protein operates within purine metabolism; AMP biosynthesis via salvage pathway; AMP from adenine: step 1/1. In terms of biological role, catalyzes a salvage reaction resulting in the formation of AMP, that is energically less costly than de novo synthesis. In Lysinibacillus sphaericus (strain C3-41), this protein is Adenine phosphoribosyltransferase.